Here is a 203-residue protein sequence, read N- to C-terminus: MKTLSPEGSLWVFGYGSLIWHPPPHYDYSIPCFIKGYVRRFWMRSEDHRGTVNSPGLVLTLIPYEEWKQFSDWSFTPFDEGCWGMAFRIPAKYATQVREYLDDREVNGYTAHSVPVYAHTGDEIPVLENCLVYVGTSKSPQFQPSDDLTQMAKIISTRRGKSGDNFVYLFELAKCLRHLSPESKDIHVFELEAEVRKQMQKTR.

12 to 17 contributes to the substrate binding site; it reads VFGYGS. The active-site Proton acceptor is the Glu-105.

The protein belongs to the gamma-glutamylcyclotransferase family. ChaC subfamily.

It is found in the cytoplasm. It localises to the nucleus. The catalysed reaction is glutathione = L-cysteinylglycine + 5-oxo-L-proline. Its function is as follows. Gamma-glutamylcyclotransferase acting specifically on glutathione, but not on other gamma-glutamyl peptides. Allows utilization of gluthathione through subsequent cleavage of the Cys-Gly dipeptide by Cys-Gly metallodipeptidase dug1. The protein is Glutathione-specific gamma-glutamylcyclotransferase of Schizosaccharomyces pombe (strain 972 / ATCC 24843) (Fission yeast).